The following is a 61-amino-acid chain: Odorranain-A6 (61 aa).

The signal sequence occupies residues 1–22; sequence MFSMKKSLLLLFFLGTISLSLC. Positions 23-45 are excised as a propeptide; that stretch reads EQERDAEEEEGSENGAEDIKINR.

Belongs to the frog skin active peptide (FSAP) family. Brevinin subfamily. Expressed by the skin glands.

The protein resides in the secreted. The polypeptide is Odorranain-A6 (Odorrana hainanensis (Odor frog)).